The primary structure comprises 179 residues: Negative modulator of initiation of replication (179 aa).

The tract at residues 86–87 (AV) is interaction with DNA.

This sequence belongs to the SeqA family. Homodimer. Polymerizes to form helical filaments.

The protein localises to the cytoplasm. Functionally, negative regulator of replication initiation, which contributes to regulation of DNA replication and ensures that replication initiation occurs exactly once per chromosome per cell cycle. Binds to pairs of hemimethylated GATC sequences in the oriC region, thus preventing assembly of replication proteins and re-initiation at newly replicated origins. Repression is relieved when the region becomes fully methylated. The protein is Negative modulator of initiation of replication of Shewanella woodyi (strain ATCC 51908 / MS32).